We begin with the raw amino-acid sequence, 499 residues long: Leukocyte immunoglobulin-like receptor subfamily A member 4 (499 aa).

The first 23 residues, 1–23 (MTLILTSLLFFGLSLGPRTRVQA), serve as a signal peptide directing secretion. Ig-like C2-type domains follow at residues 24 to 118 (ENLL…LVVT), 123 to 213 (PTLS…SDPL), 224 to 313 (PSLL…DPLD), and 324 to 413 (PSLS…SEPL). Topologically, residues 24–446 (ENLLKPILWA…PHLQDYTVEN (423 aa)) are extracellular. The cysteines at positions 49 and 98 are disulfide-linked. N-linked (GlcNAc...) asparagine glycosylation is present at N138. C143 and C195 are joined by a disulfide. Residues N239, N279, and N300 are each glycosylated (N-linked (GlcNAc...) asparagine). C244 and C295 form a disulfide bridge. C344 and C395 are joined by a disulfide. A 3'-nitrotyrosine modification is found at Y404. Residues 447–467 (LIRMGVAGLVLLFLGILLFEA) traverse the membrane as a helical segment. Over 468–499 (QHSQRSPPRCSQEANSRKDNAPFRVVEPWEQI) the chain is Cytoplasmic.

Interacts with FCER1G; this stabilizes the expression of both proteins at the cell membrane. Interacts with BST2; leads to activation of LILRA4-mediated signaling and down-regulation of the innate immune response to viral pathogens. As to expression, detected on plasmacytoid dendritic cells (at protein level). Detected on plasmacytoid dendritic cells, but not on monocytes or B cells.

It localises to the cell membrane. Its function is as follows. Functions coreceptor to limit the innate immune responses to viral infections; signaling occurs via FCER1G. Down-regulates the production of IFNA1, IFNA2, IFNA4, IFNB1 and TNF by plasmacytoid dendritic cells that have been exposed to influenza virus or cytidine-phosphate-guanosine (CpG) dinucleotides, indicating it functions as a negative regulator of TLR7 and TLR9 signaling cascades. Down-regulates interferon production in response to interaction with BST2 on HIV-1 infected cells. Activates a signaling cascade in complex with FCER1G that results in phosphorylation of Src family and Syk kinases and thereby triggers mobilization of intracellular Ca(2+). Does not interfere with the differentiation of plasmacytoid dendritic cells into antigen-presenting cells. The polypeptide is Leukocyte immunoglobulin-like receptor subfamily A member 4 (Homo sapiens (Human)).